Here is a 129-residue protein sequence, read N- to C-terminus: UPF0344 protein SAR0931 (129 aa).

A run of 4 helical transmembrane segments spans residues 1–21 (MLHLHILSWVLAIILFIATYL), 36–56 (LHMVLRLFMLLTLISGFWILI), 67–87 (MLLTLKMLCGVAVVGLMEVSI), and 99–119 (MFWITIALIIITMVLGVILPL).

This sequence belongs to the UPF0344 family.

It localises to the cell membrane. This Staphylococcus aureus (strain MRSA252) protein is UPF0344 protein SAR0931.